Here is a 539-residue protein sequence, read N- to C-terminus: Phosphoenolpyruvate carboxykinase (ATP) (539 aa).

Residues Arg-64, Tyr-206, and Lys-212 each contribute to the substrate site. ATP is bound by residues Lys-212, His-231, and 247-255 (GLSGTGKTT). The Mn(2+) site is built by Lys-212 and His-231. Asp-268 is a Mn(2+) binding site. ATP contacts are provided by residues Glu-296, Arg-332, 448–449 (RI), and Thr-454. Arg-332 contributes to the substrate binding site.

It belongs to the phosphoenolpyruvate carboxykinase (ATP) family. As to quaternary structure, monomer. Mn(2+) serves as cofactor.

Its subcellular location is the cytoplasm. It catalyses the reaction oxaloacetate + ATP = phosphoenolpyruvate + ADP + CO2. It participates in carbohydrate biosynthesis; gluconeogenesis. Its function is as follows. Involved in the gluconeogenesis. Catalyzes the conversion of oxaloacetate (OAA) to phosphoenolpyruvate (PEP) through direct phosphoryl transfer between the nucleoside triphosphate and OAA. The polypeptide is Phosphoenolpyruvate carboxykinase (ATP) (Salmonella gallinarum (strain 287/91 / NCTC 13346)).